Consider the following 123-residue polypeptide: Large ribosomal subunit protein uL14 (123 aa).

It belongs to the universal ribosomal protein uL14 family. Part of the 50S ribosomal subunit. Forms a cluster with proteins L3 and L19. In the 70S ribosome, L14 and L19 interact and together make contacts with the 16S rRNA in bridges B5 and B8.

In terms of biological role, binds to 23S rRNA. Forms part of two intersubunit bridges in the 70S ribosome. This Proteus mirabilis (strain HI4320) protein is Large ribosomal subunit protein uL14.